Reading from the N-terminus, the 228-residue chain is Endo-1,4-beta-xylanase A (228 aa).

Positions 1 to 27 (MNLRKLRLLFVMCIGLTLILTAVPAHA) are cleaved as a signal peptide. The region spanning 29-222 (TITNNEMGNH…SSGSANVMTN (194 aa)) is the GH11 domain. Glutamate 120 serves as the catalytic Nucleophile. Glutamate 209 acts as the Proton donor in catalysis.

The protein belongs to the glycosyl hydrolase 11 (cellulase G) family.

The catalysed reaction is Endohydrolysis of (1-&gt;4)-beta-D-xylosidic linkages in xylans.. The protein operates within glycan degradation; xylan degradation. This is Endo-1,4-beta-xylanase A (xynA) from Bacillus pumilus (Bacillus mesentericus).